Here is a 298-residue protein sequence, read N- to C-terminus: Protein transport protein SEC13-1 (298 aa).

6 WD repeats span residues Ala7–Val46, Gly51–Ile92, Val97–Pro138, Ala143–Leu196, Gly203–Val245, and Glu253–Ser292.

The protein belongs to the WD repeat SEC13 family. In terms of assembly, the COPII coat is composed of at least 5 proteins: the SEC23/24 complex, the SEC13/31 complex, and the protein SAR1. Component of the nuclear pore complex (NPC). NPC constitutes the exclusive means of nucleocytoplasmic transport. NPCs allow the passive diffusion of ions and small molecules and the active, nuclear transport receptor-mediated bidirectional transport of macromolecules such as proteins, RNAs, ribonucleoparticles (RNPs), and ribosomal subunits across the nuclear envelope. Due to its 8-fold rotational symmetry, all subunits are present with 8 copies or multiples thereof.

The protein localises to the cytoplasmic vesicle. It is found in the COPII-coated vesicle membrane. It localises to the endoplasmic reticulum membrane. The protein resides in the nucleus. Its subcellular location is the nuclear pore complex. Its function is as follows. Component of the coat protein complex II (COPII) which promotes the formation of transport vesicles from the endoplasmic reticulum (ER). The coat has two main functions, the physical deformation of the endoplasmic reticulum membrane into vesicles and the selection of cargo molecules. It also functions as a component of the nuclear pore complex (NPC). NPC components, collectively referred to as nucleoporins (NUPs), can play the role of both NPC structural components and of docking or interaction partners for transiently associated nuclear transport factors. SEC13 is required for efficient mRNA export from the nucleus to the cytoplasm and for correct nuclear pore biogenesis and distribution. This chain is Protein transport protein SEC13-1 (SEC131), found in Candida glabrata (strain ATCC 2001 / BCRC 20586 / JCM 3761 / NBRC 0622 / NRRL Y-65 / CBS 138) (Yeast).